The chain runs to 209 residues: Orotate phosphoribosyltransferase (209 aa).

Residues arginine 98, lysine 102, histidine 104, and 124–132 (EDLISTGKS) contribute to the 5-phospho-alpha-D-ribose 1-diphosphate site. Residue serine 128 participates in orotate binding.

Belongs to the purine/pyrimidine phosphoribosyltransferase family. PyrE subfamily. Homodimer. Requires Mg(2+) as cofactor.

It catalyses the reaction orotidine 5'-phosphate + diphosphate = orotate + 5-phospho-alpha-D-ribose 1-diphosphate. Its pathway is pyrimidine metabolism; UMP biosynthesis via de novo pathway; UMP from orotate: step 1/2. Catalyzes the transfer of a ribosyl phosphate group from 5-phosphoribose 1-diphosphate to orotate, leading to the formation of orotidine monophosphate (OMP). In Malacoplasma penetrans (strain HF-2) (Mycoplasma penetrans), this protein is Orotate phosphoribosyltransferase.